A 547-amino-acid polypeptide reads, in one-letter code: Ribosomal lysine N-methyltransferase set10 (547 aa).

Positions 17–235 (KSVEFIQSRD…KGNQLFNNYG (219 aa)) constitute an SET domain. Y234 is a binding site for S-adenosyl-L-methionine.

This sequence belongs to the class V-like SAM-binding methyltransferase superfamily. RKM1 family.

The protein localises to the cytoplasm. It is found in the nucleus. Functionally, S-adenosyl-L-methionine-dependent protein-lysine N-methyltransferase that methylates ribosomal protein L23 (rpl23a and rpl23b). This Schizosaccharomyces pombe (strain 972 / ATCC 24843) (Fission yeast) protein is Ribosomal lysine N-methyltransferase set10 (set10).